The primary structure comprises 516 residues: Leucine-rich repeat transmembrane neuronal protein 2 (516 aa).

An N-terminal signal peptide occupies residues 1–33; sequence MGLHFKWPLGAPMLAAIYAMSMVLKMLPALGMA. The LRRNT domain maps to 34–61; that stretch reads CPPKCRCEKLLFYCDSQGFHSVPNATDK. Residues 34–422 lie on the Extracellular side of the membrane; that stretch reads CPPKCRCEKL…EPDNAIFTQR (389 aa). Asn57 is a glycosylation site (N-linked (GlcNAc...) asparagine). 10 LRR repeats span residues 63 to 83, 86 to 107, 110 to 131, 134 to 155, 158 to 179, 182 to 203, 206 to 227, 230 to 251, 254 to 275, and 278 to 299; these read SLGL…QFAS, QLTW…AFQG, KLKE…TFTQ, NLQN…LFYG, KLQT…LFWD, SLEF…GFAG, KLRE…HFLR, SLHT…MEWT, TLEK…VFET, and NLKI…ILNS. Asn126 carries an N-linked (GlcNAc...) asparagine glycan. An N-linked (GlcNAc...) asparagine glycan is attached at Asn243. Positions 311-362 constitute an LRRCT domain; it reads NLWECSARICALASWLGSFQGRWEHSILCHSPDHTQGEDILDAVHGFQLCWN. Asn362 carries an N-linked (GlcNAc...) asparagine glycan. The helical transmembrane segment at 423 to 443 threads the bilayer; it reads VITGTMALLFSFFFIIFIVFI. Residues 444–516 are Cytoplasmic-facing; sequence SRKCCPPTLR…QQLPYKECEV (73 aa). An Involved in DLG4-binding motif is present at residues 513-516; the sequence is ECEV.

The protein belongs to the LRRTM family. In terms of assembly, interacts with DLG4. Interacts with neurexin NRXN1; interaction is mediated by heparan sulfate glycan modification on neurexin. As to expression, expressed in neuronal tissues.

Its subcellular location is the cell membrane. It localises to the postsynaptic cell membrane. Involved in the development and maintenance of excitatory synapses in the vertebrate nervous system. Regulates surface expression of AMPA receptors and instructs the development of functional glutamate release sites. Acts as a ligand for the presynaptic receptors NRXN1-A and NRXN1-B. This Homo sapiens (Human) protein is Leucine-rich repeat transmembrane neuronal protein 2 (LRRTM2).